Here is a 489-residue protein sequence, read N- to C-terminus: Hyaluronoglucuronidase (489 aa).

E176 serves as the catalytic Proton donor. The Nucleophile role is filled by E290.

It belongs to the glycosyl hydrolase 79 family.

It catalyses the reaction Random hydrolysis of (1-&gt;3)-linkages between beta-D-glucuronate and N-acetyl-D-glucosamine residues in hyaluronate.. Its activity is regulated as follows. Hyaluronidase activity is inhibited by Mn(2+), Cu(2+) and Fe(3+). Its function is as follows. Hyaluronidase that mediates hydrolysis of (1-&gt;3)-linkages between beta-D-glucuronate and N-acetyl-D-glucosamine residues in hyaluronate. Very specific to hyaluronate: not able to hydrolyze chitin, heparin or chondroitin sulfate. In Hirudo nipponia (Korean blood-sucking leech), this protein is Hyaluronoglucuronidase.